The primary structure comprises 760 residues: Transferrin receptor protein 1 (760 aa).

Residues 1-65 are Cytoplasmic-facing; that stretch reads MMDQARSAFS…VTKPKRCGGS (65 aa). The mediates interaction with SH3BP4 stretch occupies residues 1–67; the sequence is MMDQARSAFS…KPKRCGGSIC (67 aa). Phosphoserine occurs at positions 10 and 19. Y20 carries the post-translational modification Phosphotyrosine. Positions 20–23 match the Endocytosis signal motif; sequence YTRF. T21 carries the post-translational modification Phosphothreonine. S24 carries the post-translational modification Phosphoserine. Positions 58-61 match the Stop-transfer sequence motif; sequence KPKR. S-palmitoyl cysteine attachment occurs at residues C62 and C67. The helical; Signal-anchor for type II membrane protein transmembrane segment at 66–86 threads the bilayer; the sequence is ICYGTIAVIIFFLIGFMIGYL. Over 87–760 the chain is Extracellular; it reads GYCKGVEPKT…GDVWDIDNEF (674 aa). Positions 223–313 constitute a PA domain; the sequence is SKAATVTGKL…GTGDPYTPGF (91 aa). N-linked (GlcNAc...) asparagine glycans are attached at residues N251 and N317. The ligand-binding stretch occupies residues 569 to 760; sequence TMDTYKELTE…GDVWDIDNEF (192 aa). The short motif at 646-648 is the Cell attachment site element; sequence RGD. N-linked (GlcNAc...) asparagine glycosylation is found at N722 and N727.

It belongs to the peptidase M28 family. M28B subfamily. As to quaternary structure, homodimer; disulfide-linked. Binds one transferrin or HFE molecule per subunit. Interacts with SH3BP4. Interacts with STEAP3; facilitates TFRC endocytosis in erythroid precursor cells. In terms of processing, stearoylated by ZDHHC6 which inhibits TFRC-mediated activation of the JNK pathway and promotes mitochondrial fragmentation. Stearoylation does not affect iron uptake.

It localises to the cell membrane. It is found in the melanosome. Cellular uptake of iron occurs via receptor-mediated endocytosis of ligand-occupied transferrin receptor into specialized endosomes. Endosomal acidification leads to iron release. The apotransferrin-receptor complex is then recycled to the cell surface with a return to neutral pH and the concomitant loss of affinity of apotransferrin for its receptor. Transferrin receptor is necessary for development of erythrocytes and the nervous system. Positively regulates T and B cell proliferation through iron uptake. Acts as a lipid sensor that regulates mitochondrial fusion by regulating activation of the JNK pathway. When dietary levels of stearate (C18:0) are low, promotes activation of the JNK pathway, resulting in HUWE1-mediated ubiquitination and subsequent degradation of the mitofusin MFN2 and inhibition of mitochondrial fusion. When dietary levels of stearate (C18:0) are high, TFRC stearoylation inhibits activation of the JNK pathway and thus degradation of the mitofusin MFN2. Mediates uptake of NICOL1 into fibroblasts where it may regulate extracellular matrix production. The sequence is that of Transferrin receptor protein 1 (TFRC) from Pongo abelii (Sumatran orangutan).